Here is a 246-residue protein sequence, read N- to C-terminus: 3-deoxy-manno-octulosonate cytidylyltransferase (246 aa).

It belongs to the KdsB family. Homodimer.

It is found in the cytoplasm. It catalyses the reaction 3-deoxy-alpha-D-manno-oct-2-ulosonate + CTP = CMP-3-deoxy-beta-D-manno-octulosonate + diphosphate. It participates in nucleotide-sugar biosynthesis; CMP-3-deoxy-D-manno-octulosonate biosynthesis; CMP-3-deoxy-D-manno-octulosonate from 3-deoxy-D-manno-octulosonate and CTP: step 1/1. Its pathway is bacterial outer membrane biogenesis; lipopolysaccharide biosynthesis. In terms of biological role, activates KDO (a required 8-carbon sugar) for incorporation into bacterial lipopolysaccharide in Gram-negative bacteria. The chain is 3-deoxy-manno-octulosonate cytidylyltransferase (kpsU) from Escherichia coli.